A 132-amino-acid polypeptide reads, in one-letter code: Agouti-signaling protein (132 aa).

An N-terminal signal peptide occupies residues 1 to 22 (MDVTRLLLATLLVFLCFFAAYS). Asn-39 is a glycosylation site (N-linked (GlcNAc...) asparagine). Residues 61-93 (KISRKEAEKKRSSKKEASKQKVARPRTPLSVPC) form a disordered region. A compositionally biased stretch (basic and acidic residues) spans 64–79 (RKEAEKKRSSKKEASK). 5 disulfide bridges follow: Cys-93–Cys-108, Cys-100–Cys-114, Cys-107–Cys-125, Cys-111–Cys-132, and Cys-116–Cys-123. Positions 93-132 (CVSTRGSCKPPAPACCHPCASCQCRFFRSACSCRVLNVNC) constitute an Agouti domain.

The protein resides in the secreted. Its function is as follows. Involved in the regulation of melanogenesis. The binding of ASP to MC1R precludes alpha-MSH initiated signaling and thus blocks production of cAMP, leading to a down-regulation of eumelanogenesis (brown/black pigment) and thus increasing synthesis of pheomelanin (yellow/red pigment). The polypeptide is Agouti-signaling protein (ASIP) (Callithrix geoffroyi (Geoffroy's marmoset)).